We begin with the raw amino-acid sequence, 127 residues long: Adult-specific rigid cuticular protein 12.6 (127 aa).

The Chitin-binding type R&amp;R domain occupies 9 to 87; it reads GPAYNFGYNT…ALAALAPKAP (79 aa).

Its function is as follows. Component of the rigid cuticle of the spider. The protein is Adult-specific rigid cuticular protein 12.6 of Araneus diadematus (European garden spider).